Reading from the N-terminus, the 190-residue chain is GTP cyclohydrolase 1 (190 aa).

Zn(2+)-binding residues include Cys80, His83, and Cys151.

It belongs to the GTP cyclohydrolase I family. Toroid-shaped homodecamer, composed of two pentamers of five dimers.

It catalyses the reaction GTP + H2O = 7,8-dihydroneopterin 3'-triphosphate + formate + H(+). Its pathway is cofactor biosynthesis; 7,8-dihydroneopterin triphosphate biosynthesis; 7,8-dihydroneopterin triphosphate from GTP: step 1/1. This Rickettsia akari (strain Hartford) protein is GTP cyclohydrolase 1.